Here is a 134-residue protein sequence, read N- to C-terminus: NADH-quinone oxidoreductase subunit A 1 (134 aa).

The next 3 membrane-spanning stretches (helical) occupy residues 10 to 30, 65 to 85, and 94 to 114; these read LIPL…LLLA, FYLI…ILAW, and IPGL…LVWL.

This sequence belongs to the complex I subunit 3 family. NDH-1 is composed of 14 different subunits. Subunits NuoA, H, J, K, L, M, N constitute the membrane sector of the complex.

The protein localises to the cell inner membrane. The catalysed reaction is a quinone + NADH + 5 H(+)(in) = a quinol + NAD(+) + 4 H(+)(out). In terms of biological role, NDH-1 shuttles electrons from NADH, via FMN and iron-sulfur (Fe-S) centers, to quinones in the respiratory chain. The immediate electron acceptor for the enzyme in this species is believed to be ubiquinone. Couples the redox reaction to proton translocation (for every two electrons transferred, four hydrogen ions are translocated across the cytoplasmic membrane), and thus conserves the redox energy in a proton gradient. The protein is NADH-quinone oxidoreductase subunit A 1 of Citrifermentans bemidjiense (strain ATCC BAA-1014 / DSM 16622 / JCM 12645 / Bem) (Geobacter bemidjiensis).